An 85-amino-acid polypeptide reads, in one-letter code: U4-theraphotoxin-Hhn1a (85 aa).

The first 22 residues, 1-22 (MKMTLIAILTCAAVLVLHTTAA), serve as a signal peptide directing secretion. A propeptide spanning residues 23 to 48 (EELEAESQLMEVGMPDTELAAVDEER) is cleaved from the precursor. Cystine bridges form between C52–C66, C56–C77, and C71–C82.

This sequence belongs to the neurotoxin 12 (Hwtx-2) family. 02 (Hwtx-2) subfamily. As to quaternary structure, monomer. Expressed by the venom gland.

Its subcellular location is the secreted. In terms of biological role, neurotoxin active on both insects and mammals. This Cyriopagopus hainanus (Chinese bird spider) protein is U4-theraphotoxin-Hhn1a.